The following is a 74-amino-acid chain: Protein krueppel (74 aa).

C2H2-type zinc fingers lie at residues 1–4 (ERTH), 10–32 (FKCP…MRLH), 38–60 (YHCS…LRVH), and 66–74 (YTCEICKAK).

Belongs to the krueppel C2H2-type zinc-finger protein family.

It is found in the nucleus. Krueppel is a gap class segmentation protein. This chain is Protein krueppel (Kr), found in Bradysia coprophila (Dark-winged fungus gnat).